Reading from the N-terminus, the 148-residue chain is MRAYFVLLVAATAILTYGGATATYSTSKGEMNLTGTVENNRPTRSLRVAPSGGNGEERSWSTIYGISRSKAETVRDWLMPRLNQGMDVQALAREMGITSRQAATQHQNWDALVKYLKMYNYAVRGEKMSKSMAESVLLHNVLTAKNNF.

A signal peptide spans Met1–Ala22. N-linked (GlcNAc...) asparagine glycosylation is present at Asn32. Residues Arg44–Arg58 carry the RxLR-dEER motif.

Belongs to the RxLR effector family.

It is found in the secreted. It localises to the host cytoplasm. The protein localises to the host cell membrane. Its function is as follows. Effector that suppresses flg22-induced post-translational MAP kinase activation in tomato but not in Arabidopsis. The perception of highly conserved pathogen- or microbe-associated molecular patterns (PAMPs/MAMPs), such as flg22, triggers converging signaling pathways recruiting MAP kinase cascades and inducing transcriptional re-programming, yielding a generic antimicrobial response. Also partially attenuates INF1-triggered cell death. The protein is RxLR effector protein SFI7 of Phytophthora infestans (strain T30-4) (Potato late blight agent).